The primary structure comprises 404 residues: Phospho-N-acetylmuramoyl-pentapeptide-transferase (404 aa).

10 helical membrane-spanning segments follow: residues 30 to 50 (SAAI…IIFF), 73 to 93 (IPTM…LLFA), 100 to 120 (IMLL…DDYI), 132 to 152 (GKFK…TLIF), 209 to 229 (YMWI…SNGA), 242 to 262 (TSAI…NVIF), 274 to 294 (LAEL…FLWY), 301 to 321 (IFMG…LAIV), 326 to 346 (LMIP…IIQV), and 381 to 401 (KIVT…LVTL).

It belongs to the glycosyltransferase 4 family. MraY subfamily. Requires Mg(2+) as cofactor.

Its subcellular location is the cell inner membrane. The catalysed reaction is UDP-N-acetyl-alpha-D-muramoyl-L-alanyl-gamma-D-glutamyl-meso-2,6-diaminopimeloyl-D-alanyl-D-alanine + di-trans,octa-cis-undecaprenyl phosphate = di-trans,octa-cis-undecaprenyl diphospho-N-acetyl-alpha-D-muramoyl-L-alanyl-D-glutamyl-meso-2,6-diaminopimeloyl-D-alanyl-D-alanine + UMP. Its pathway is cell wall biogenesis; peptidoglycan biosynthesis. Functionally, catalyzes the initial step of the lipid cycle reactions in the biosynthesis of the cell wall peptidoglycan: transfers peptidoglycan precursor phospho-MurNAc-pentapeptide from UDP-MurNAc-pentapeptide onto the lipid carrier undecaprenyl phosphate, yielding undecaprenyl-pyrophosphoryl-MurNAc-pentapeptide, known as lipid I. The chain is Phospho-N-acetylmuramoyl-pentapeptide-transferase from Amoebophilus asiaticus (strain 5a2).